Here is a 401-residue protein sequence, read N- to C-terminus: Formate-dependent phosphoribosylglycinamide formyltransferase (401 aa).

N(1)-(5-phospho-beta-D-ribosyl)glycinamide-binding positions include 22–23 (EL) and Glu82. Residues Arg115, Lys157, 162-167 (SSGKGQ), 197-200 (EGFI), and Glu205 contribute to the ATP site. The region spanning 120–315 (RLAAESLGLP…EFELHARAIL (196 aa)) is the ATP-grasp domain. Mg(2+)-binding residues include Glu274 and Glu286. Residues Asp293, Lys362, and 369–370 (RR) each bind N(1)-(5-phospho-beta-D-ribosyl)glycinamide.

Belongs to the PurK/PurT family. As to quaternary structure, homodimer.

The catalysed reaction is N(1)-(5-phospho-beta-D-ribosyl)glycinamide + formate + ATP = N(2)-formyl-N(1)-(5-phospho-beta-D-ribosyl)glycinamide + ADP + phosphate + H(+). It participates in purine metabolism; IMP biosynthesis via de novo pathway; N(2)-formyl-N(1)-(5-phospho-D-ribosyl)glycinamide from N(1)-(5-phospho-D-ribosyl)glycinamide (formate route): step 1/1. Its function is as follows. Involved in the de novo purine biosynthesis. Catalyzes the transfer of formate to 5-phospho-ribosyl-glycinamide (GAR), producing 5-phospho-ribosyl-N-formylglycinamide (FGAR). Formate is provided by PurU via hydrolysis of 10-formyl-tetrahydrofolate. The sequence is that of Formate-dependent phosphoribosylglycinamide formyltransferase from Cupriavidus necator (strain ATCC 17699 / DSM 428 / KCTC 22496 / NCIMB 10442 / H16 / Stanier 337) (Ralstonia eutropha).